A 242-amino-acid polypeptide reads, in one-letter code: Probable ABC transporter ATP-binding protein PEB1C (242 aa).

The region spanning 2–236 (IELKNVNKYY…PKTERARLFL (235 aa)) is the ABC transporter domain. 34 to 41 (GPSGSGKS) provides a ligand contact to ATP.

This sequence belongs to the ABC transporter superfamily.

The protein localises to the cell inner membrane. Its function is as follows. Most probably involved, with PEB1, in a binding-protein-dependent transport system for an amino acid. Probably responsible for energy coupling to the transport system. The chain is Probable ABC transporter ATP-binding protein PEB1C (peb1C) from Campylobacter jejuni subsp. jejuni serotype O:23/36 (strain 81-176).